Here is a 432-residue protein sequence, read N- to C-terminus: DnaJ-like protein 1 (432 aa).

The region spanning 4–73 (DTEYYDLLGV…RAKYDKYGRK (70 aa)) is the J domain. Residues 117 to 187 (NAEDEAEKEK…KKNEQVGAEA (71 aa)) form a disordered region.

Belongs to the DnaJ family. In terms of assembly, interacts with SLN1.

It is found in the cytoplasm. Required for peroxisomal protein import which maintains the function of peroxisomes. The polypeptide is DnaJ-like protein 1 (DJP1) (Saccharomyces cerevisiae (strain ATCC 204508 / S288c) (Baker's yeast)).